Consider the following 458-residue polypeptide: Oxysterol-binding protein-related protein 3B (458 aa).

3 disordered regions span residues Val-47–Trp-66, Asp-370–Pro-401, and Arg-431–Thr-458. Positions Gly-375 to Gly-396 are enriched in basic and acidic residues. Over residues Pro-443 to Thr-458 the composition is skewed to polar residues.

The protein belongs to the OSBP family. As to expression, expressed in roots, leaves, stems and flowers.

May be involved in the transport of sterols. This chain is Oxysterol-binding protein-related protein 3B (ORP3B), found in Arabidopsis thaliana (Mouse-ear cress).